Consider the following 353-residue polypeptide: Holliday junction branch migration complex subunit RuvB (353 aa).

The tract at residues 4 to 190 (HYIRFKIMTN…FGIPMRLNFY (187 aa)) is large ATPase domain (RuvB-L). Residues I29, R30, G71, K74, T75, T76, 137–139 (EDF), R180, Y190, and R227 each bind ATP. T75 lines the Mg(2+) pocket. A small ATPAse domain (RuvB-S) region spans residues 191-261 (NTEELKKVLN…ISDFGLNRLE (71 aa)). The head domain (RuvB-H) stretch occupies residues 264 to 353 (RIGLDSNDYR…HQFNIFNEHE (90 aa)). DNA is bound by residues R300, R319, and R324.

This sequence belongs to the RuvB family. As to quaternary structure, homohexamer. Forms an RuvA(8)-RuvB(12)-Holliday junction (HJ) complex. HJ DNA is sandwiched between 2 RuvA tetramers; dsDNA enters through RuvA and exits via RuvB. An RuvB hexamer assembles on each DNA strand where it exits the tetramer. Each RuvB hexamer is contacted by two RuvA subunits (via domain III) on 2 adjacent RuvB subunits; this complex drives branch migration. In the full resolvosome a probable DNA-RuvA(4)-RuvB(12)-RuvC(2) complex forms which resolves the HJ.

The protein resides in the cytoplasm. It catalyses the reaction ATP + H2O = ADP + phosphate + H(+). Its function is as follows. The RuvA-RuvB-RuvC complex processes Holliday junction (HJ) DNA during genetic recombination and DNA repair, while the RuvA-RuvB complex plays an important role in the rescue of blocked DNA replication forks via replication fork reversal (RFR). RuvA specifically binds to HJ cruciform DNA, conferring on it an open structure. The RuvB hexamer acts as an ATP-dependent pump, pulling dsDNA into and through the RuvAB complex. RuvB forms 2 homohexamers on either side of HJ DNA bound by 1 or 2 RuvA tetramers; 4 subunits per hexamer contact DNA at a time. Coordinated motions by a converter formed by DNA-disengaged RuvB subunits stimulates ATP hydrolysis and nucleotide exchange. Immobilization of the converter enables RuvB to convert the ATP-contained energy into a lever motion, pulling 2 nucleotides of DNA out of the RuvA tetramer per ATP hydrolyzed, thus driving DNA branch migration. The RuvB motors rotate together with the DNA substrate, which together with the progressing nucleotide cycle form the mechanistic basis for DNA recombination by continuous HJ branch migration. Branch migration allows RuvC to scan DNA until it finds its consensus sequence, where it cleaves and resolves cruciform DNA. The protein is Holliday junction branch migration complex subunit RuvB of Rickettsia massiliae (strain Mtu5).